A 359-amino-acid polypeptide reads, in one-letter code: UDP-N-acetylglucosamine--N-acetylmuramyl-(pentapeptide) pyrophosphoryl-undecaprenol N-acetylglucosamine transferase (359 aa).

Residues 12–14, N124, R163, S191, I245, 264–269, and Q290 each bind UDP-N-acetyl-alpha-D-glucosamine; these read TGG and ALTVAE.

It belongs to the glycosyltransferase 28 family. MurG subfamily.

The protein localises to the cell inner membrane. It catalyses the reaction di-trans,octa-cis-undecaprenyl diphospho-N-acetyl-alpha-D-muramoyl-L-alanyl-D-glutamyl-meso-2,6-diaminopimeloyl-D-alanyl-D-alanine + UDP-N-acetyl-alpha-D-glucosamine = di-trans,octa-cis-undecaprenyl diphospho-[N-acetyl-alpha-D-glucosaminyl-(1-&gt;4)]-N-acetyl-alpha-D-muramoyl-L-alanyl-D-glutamyl-meso-2,6-diaminopimeloyl-D-alanyl-D-alanine + UDP + H(+). It functions in the pathway cell wall biogenesis; peptidoglycan biosynthesis. Its function is as follows. Cell wall formation. Catalyzes the transfer of a GlcNAc subunit on undecaprenyl-pyrophosphoryl-MurNAc-pentapeptide (lipid intermediate I) to form undecaprenyl-pyrophosphoryl-MurNAc-(pentapeptide)GlcNAc (lipid intermediate II). The protein is UDP-N-acetylglucosamine--N-acetylmuramyl-(pentapeptide) pyrophosphoryl-undecaprenol N-acetylglucosamine transferase of Nitrosococcus oceani (strain ATCC 19707 / BCRC 17464 / JCM 30415 / NCIMB 11848 / C-107).